We begin with the raw amino-acid sequence, 500 residues long: FAD-linked oxidoreductase srdI (500 aa).

Residues 1–20 (MHLSSSLLFTSALLAGGINA) form the signal peptide. The N-linked (GlcNAc...) asparagine glycan is linked to Asn47. One can recognise an FAD-binding PCMH-type domain in the interval 69 to 241 (YRPPSYQAAI…TQATYKMHKS (173 aa)). Residues Asn257 and Asn282 are each glycosylated (N-linked (GlcNAc...) asparagine).

This sequence belongs to the oxygen-dependent FAD-linked oxidoreductase family. The cofactor is FAD.

Its function is as follows. FAD-linked oxidoreductase; part of the gene cluster that mediates the biosynthesis of sordarial, a salicylic aldehyde structurally related to the phytotoxin pyriculol. The most interesting aspect of this pathway is formation of an aromatic product from the highly reducing polyketide synthase srdA. SrdA synthesizes a reduced polyketide chain from one molecule of acetyl-CoA and five molecules of malonyl-CoA. The polyketide chain is then reductively released as an aldehyde. The oxidoreductases srdC, srdD and srdE then oxidize one of the hydroxy groups to facilitate the intramolecular aldol condensation, followed by dehydration to yield a salicylic aldehyde. This aldehyde can undergo facile reduction by endogenous reductases to yield the alcohol 1-hydroxy-2-hydroxymethyl-3-pent-1,3-dienylbenzene. The flavin-dependent srdI counteract against the propensity of the aldehydes to be reduced under physiological conditions and is responsible for reoxidizing 1-hydroxy-2-hydroxymethyl-3-pent-1,3-dienylbenzene back to the salicylic aldehyde. This salicylic aldehyde is then selectively epoxidized by the cupin-domain-containing oxidoreductase srdB to yield the epoxide, which can be hydrolyzed stereoselectively by the hydrolase srdG to give the final product sordarial. The chain is FAD-linked oxidoreductase srdI from Neurospora crassa (strain ATCC 24698 / 74-OR23-1A / CBS 708.71 / DSM 1257 / FGSC 987).